The following is an 832-amino-acid chain: Protein P (832 aa).

Residues 1 to 177 (MPLSYQHFRK…FCGSPYSWEQ (177 aa)) are terminal protein domain (TP). The spacer stretch occupies residues 178–335 (ELQHGAESFH…YCLSHIVNLL (158 aa)). Polar residues predominate over residues 186–206 (FHQQSSGILSRPSVGSSLQSK). Disordered regions lie at residues 186 to 255 (FHQQ…GHNA) and 280 to 305 (TSEN…RSQS). Residues 210–220 (SRLGLQSQQGH) show a composition bias toward low complexity. Residues 336 to 679 (EDWGPCAEHG…YLNLYPVARQ (344 aa)) form a polymerase/reverse transcriptase domain (RT) region. The region spanning 346–589 (EHHIRIPRTP…YSLNFMGYVI (244 aa)) is the Reverse transcriptase domain. Mg(2+) contacts are provided by Asp-418, Asp-540, and Asp-541.

This sequence belongs to the hepadnaviridae P protein family.

The enzyme catalyses DNA(n) + a 2'-deoxyribonucleoside 5'-triphosphate = DNA(n+1) + diphosphate. The catalysed reaction is Endonucleolytic cleavage to 5'-phosphomonoester.. Activated by host HSP70 and HSP40 in vitro to be able to bind the epsilon loop of the pgRNA. Because deletion of the RNase H region renders the protein partly chaperone-independent, the chaperones may be needed indirectly to relieve occlusion of the RNA-binding site by this domain. Inhibited by several reverse-transcriptase inhibitors: Lamivudine, Adefovir and Entecavir. In terms of biological role, multifunctional enzyme that converts the viral RNA genome into dsDNA in viral cytoplasmic capsids. This enzyme displays a DNA polymerase activity that can copy either DNA or RNA templates, and a ribonuclease H (RNase H) activity that cleaves the RNA strand of RNA-DNA heteroduplexes in a partially processive 3'- to 5'-endonucleasic mode. Neo-synthesized pregenomic RNA (pgRNA) are encapsidated together with the P protein, and reverse-transcribed inside the nucleocapsid. Initiation of reverse-transcription occurs first by binding the epsilon loop on the pgRNA genome, and is initiated by protein priming, thereby the 5'-end of (-)DNA is covalently linked to P protein. Partial (+)DNA is synthesized from the (-)DNA template and generates the relaxed circular DNA (RC-DNA) genome. After budding and infection, the RC-DNA migrates in the nucleus, and is converted into a plasmid-like covalently closed circular DNA (cccDNA). The activity of P protein does not seem to be necessary for cccDNA generation, and is presumably released from (+)DNA by host nuclear DNA repair machinery. In Hepatitis B virus genotype D subtype ayw (isolate Australia/AustKW/1991) (HBV-D), this protein is Protein P.